The chain runs to 142 residues: MLLTADDKKHIKAILPSIAAHGDKFGGEALYRMFLINPKTKTYFPNFDFHHNSKQISAHGKKVVDALNEAANHLDNIAGSMSKLSDLHAYDLRVDPGNFPLLAHNILVTVAMYFPQQFDPHTHKALDKFLASVSSVLTSKYR.

One can recognise a Globin domain in the interval 2–142; sequence LLTADDKKHI…VSSVLTSKYR (141 aa). His59 is an O2 binding site. His88 contributes to the heme b binding site.

The protein belongs to the globin family. In terms of assembly, heterotetramer of two alpha chains and two beta chains. Red blood cells.

Functionally, involved in oxygen transport from the lung to the various peripheral tissues. The protein is Hemoglobin subunit alpha-2 (hba2) of Xenopus borealis (Kenyan clawed frog).